Consider the following 341-residue polypeptide: Tetraacyldisaccharide 4'-kinase (341 aa).

54–61 (TVGGAGKT) provides a ligand contact to ATP.

It belongs to the LpxK family.

It catalyses the reaction a lipid A disaccharide + ATP = a lipid IVA + ADP + H(+). Its pathway is glycolipid biosynthesis; lipid IV(A) biosynthesis; lipid IV(A) from (3R)-3-hydroxytetradecanoyl-[acyl-carrier-protein] and UDP-N-acetyl-alpha-D-glucosamine: step 6/6. In terms of biological role, transfers the gamma-phosphate of ATP to the 4'-position of a tetraacyldisaccharide 1-phosphate intermediate (termed DS-1-P) to form tetraacyldisaccharide 1,4'-bis-phosphate (lipid IVA). This is Tetraacyldisaccharide 4'-kinase from Brucella anthropi (strain ATCC 49188 / DSM 6882 / CCUG 24695 / JCM 21032 / LMG 3331 / NBRC 15819 / NCTC 12168 / Alc 37) (Ochrobactrum anthropi).